Here is a 936-residue protein sequence, read N- to C-terminus: Lon protease homolog, mitochondrial (936 aa).

Residues 1-40 (MYATRAIARRLERHAARCKGAHVARAVRGARARTTSAPRA) constitute a mitochondrion transit peptide. The segment at 65-95 (AFVSSVDGDGSTGSTGSSSSSSSSAFGDSAS) is disordered. A compositionally biased stretch (low complexity) spans 66 to 95 (FVSSVDGDGSTGSTGSSSSSSSSAFGDSAS). One can recognise a Lon N-terminal domain in the interval 112–352 (VLAVPLPRRP…ATLELLKKEV (241 aa)). 507–514 (GPPGVGKT) lines the ATP pocket. The Lon proteolytic domain maps to 748-932 (VTPPGVVTGL…DEVYRQALDW (185 aa)). Catalysis depends on residues Ser838 and Lys881.

This sequence belongs to the peptidase S16 family. In terms of assembly, homohexamer or homoheptamer. Organized in a ring with a central cavity.

The protein localises to the mitochondrion matrix. It catalyses the reaction Hydrolysis of proteins in presence of ATP.. Its function is as follows. ATP-dependent serine protease that mediates the selective degradation of misfolded, unassembled or oxidatively damaged polypeptides as well as certain short-lived regulatory proteins in the mitochondrial matrix. May also have a chaperone function in the assembly of inner membrane protein complexes. Participates in the regulation of mitochondrial gene expression and in the maintenance of the integrity of the mitochondrial genome. Binds to mitochondrial DNA in a site-specific manner. This is Lon protease homolog, mitochondrial from Ostreococcus lucimarinus (strain CCE9901).